We begin with the raw amino-acid sequence, 248 residues long: Octanoyltransferase (248 aa).

One can recognise a BPL/LPL catalytic domain in the interval 53 to 238; it reads ADTGDEIWVV…NLDGASAAAD (186 aa). Residues 93-100, 165-167, and 178-180 contribute to the substrate site; these read RGGQITYH, ALG, and GLS. The active-site Acyl-thioester intermediate is C196.

The protein belongs to the LipB family.

The protein localises to the cytoplasm. The catalysed reaction is octanoyl-[ACP] + L-lysyl-[protein] = N(6)-octanoyl-L-lysyl-[protein] + holo-[ACP] + H(+). Its pathway is protein modification; protein lipoylation via endogenous pathway; protein N(6)-(lipoyl)lysine from octanoyl-[acyl-carrier-protein]: step 1/2. Catalyzes the transfer of endogenously produced octanoic acid from octanoyl-acyl-carrier-protein onto the lipoyl domains of lipoate-dependent enzymes. Lipoyl-ACP can also act as a substrate although octanoyl-ACP is likely to be the physiological substrate. The chain is Octanoyltransferase from Burkholderia orbicola (strain MC0-3).